Reading from the N-terminus, the 101-residue chain is Large ribosomal subunit protein bL9m (101 aa).

A mitochondrion-targeting transit peptide spans 1–32 (MSIMKPTTRFFRFNSLELAVSPFQRIYGQLRF).

This sequence belongs to the bacterial ribosomal protein bL9 family. Component of the mitochondrial large ribosomal subunit (mt-LSU). Mature yeast 74S mitochondrial ribosomes consist of a small (37S) and a large (54S) subunit. The 37S small subunit contains a 15S ribosomal RNA (15S mt-rRNA) and at least 32 different proteins. The 54S large subunit contains a 21S rRNA (21S mt-rRNA) and at least 45 different proteins.

Its subcellular location is the mitochondrion. Its function is as follows. Component of the mitochondrial ribosome (mitoribosome), a dedicated translation machinery responsible for the synthesis of mitochondrial genome-encoded proteins, including at least some of the essential transmembrane subunits of the mitochondrial respiratory chain. The mitoribosomes are attached to the mitochondrial inner membrane and translation products are cotranslationally integrated into the membrane. In Schizosaccharomyces pombe (strain 972 / ATCC 24843) (Fission yeast), this protein is Large ribosomal subunit protein bL9m.